Here is a 416-residue protein sequence, read N- to C-terminus: Neurotensin receptor type 2 (416 aa).

Residues 1-32 are Extracellular-facing; the sequence is METSSLWPPRPSPSAGLSLEARLGVDTRLWAK. A helical transmembrane segment spans residues 33–55; that stretch reads VLFTALYSLIFALGTAGNALSVH. At 56-64 the chain is on the cytoplasmic side; that stretch reads VVLKARAGR. The chain crosses the membrane as a helical span at residues 65–87; the sequence is PGRLRYHVLSLALSALLLLLISV. At 88–109 the chain is on the extracellular side; that stretch reads PMELYNFVWSHYPWVFGDLGCR. A disulfide bond links Cys-108 and Cys-194. The helical transmembrane segment at 110–131 threads the bilayer; it reads GYYFVRELCAYATVLSVASLSA. The Cytoplasmic portion of the chain corresponds to 132–154; the sequence is ERCLAVCQPLRARRLLTPRRTRR. Residues 155 to 176 traverse the membrane as a helical segment; sequence LLSLVWVASLGLALPMAVIMGQ. Residues 177 to 217 are Extracellular-facing; that stretch reads KHEMERADGEPEPASRVCTVLVSRATLQVFIQVNVLVSFVL. A helical transmembrane segment spans residues 218–237; sequence PLALTAFLNGITVNHLVALY. Topologically, residues 238–297 are cytoplasmic; it reads SQVPSASAQVNSIPSRLELLSEEGLLGFITWRKTLSLGVQASLVRHKDASQIRSLQHSAQ. The helical transmembrane segment at 298–318 threads the bilayer; the sequence is VLRAIVAVYVICWLPYHARRL. Residues 319–337 are Extracellular-facing; that stretch reads MYCYIPDDGWTDELYDFYH. The helical transmembrane segment at 338–358 threads the bilayer; sequence YFYMVTNTLFYVSSAVTPVLY. The Cytoplasmic segment spans residues 359-416; the sequence is NAVSSSFRKLFLESLSSLCGEQRSVVPLPQEAPESTTSTYSFRLWGSPRNPSLGEIQV. A lipid anchor (S-palmitoyl cysteine) is attached at Cys-377. Ser-410 bears the Phosphoserine mark.

This sequence belongs to the G-protein coupled receptor 1 family. Neurotensin receptor subfamily. NTSR2 sub-subfamily. Expressed maximally in the cerebellum, hippocampus, piriform cortex and neocortex of adult brain.

The protein resides in the cell membrane. In terms of biological role, receptor for the tridecapeptide neurotensin. It is associated with G proteins that activate a phosphatidylinositol-calcium second messenger system. The chain is Neurotensin receptor type 2 (Ntsr2) from Mus musculus (Mouse).